The primary structure comprises 3165 residues: ORFB polyprotein (3165 aa).

The 148-residue stretch at 271 to 418 (MARSIGLSHE…LENEPDILVG (148 aa)) folds into the Peptidase C8 domain. Residues C341 and H388 each act as for papain-like protease p48 activity in the active site. The segment at 453 to 472 (AEPGQRAKDNTNPSTPRPIE) is disordered. The next 6 helical transmembrane spans lie at 791-811 (IMIA…YVPY), 823-843 (YILL…GYAC), 1166-1186 (AGLF…AAIM), 1193-1213 (KYLV…KALW), 1215-1235 (FPIF…VSVY), and 1356-1376 (ALGF…LRPP). The tract at residues 1793–2208 (FYKSRKALKQ…AEDSADYRAW (416 aa)) is RNA-directed RNA polymerase. 3 helical membrane-spanning segments follow: residues 2495 to 2515 (VRIY…MHWV), 2517 to 2537 (LFIQ…WSFW), and 2590 to 2610 (LGIV…EVLF). Residues 2651–2796 (ATKAIEHGHV…IPFLEPTLPK (146 aa)) enclose the Helicase ATP-binding domain. Residue 2664-2671 (AKTASGKS) coordinates ATP. The short motif at 2751 to 2754 (DEFH) is the DEFH box element.

This sequence in the C-terminal section; belongs to the DEAD box helicase family. Post-translationally, papain-like protease p48 is autocatalytically processed. The putative RNA-directed RNA polymerase/helicase may be further processed.

The protein resides in the host membrane. The enzyme catalyses RNA(n) + a ribonucleoside 5'-triphosphate = RNA(n+1) + diphosphate. It carries out the reaction ATP + H2O = ADP + phosphate + H(+). Its function is as follows. Papain-like protease p48 is a cysteine protease of the peptidase family C8. In Cryphonectria hypovirus 1 (strain EP713) (CHV-1/EP713), this protein is ORFB polyprotein.